Here is a 45-residue protein sequence, read N- to C-terminus: Photosystem II reaction center protein K (45 aa).

Residues Met1–Ala8 constitute a propeptide that is removed on maturation. The helical transmembrane segment at Ile23–Gly43 threads the bilayer.

This sequence belongs to the PsbK family. As to quaternary structure, PSII is composed of 1 copy each of membrane proteins PsbA, PsbB, PsbC, PsbD, PsbE, PsbF, PsbH, PsbI, PsbJ, PsbK, PsbL, PsbM, PsbT, PsbX, PsbY, PsbZ, Psb30/Ycf12, at least 3 peripheral proteins of the oxygen-evolving complex and a large number of cofactors. It forms dimeric complexes.

Its subcellular location is the plastid. It localises to the chloroplast thylakoid membrane. One of the components of the core complex of photosystem II (PSII). PSII is a light-driven water:plastoquinone oxidoreductase that uses light energy to abstract electrons from H(2)O, generating O(2) and a proton gradient subsequently used for ATP formation. It consists of a core antenna complex that captures photons, and an electron transfer chain that converts photonic excitation into a charge separation. The chain is Photosystem II reaction center protein K from Pyropia yezoensis (Susabi-nori).